The chain runs to 208 residues: Uracil phosphoribosyltransferase (208 aa).

5-phospho-alpha-D-ribose 1-diphosphate contacts are provided by residues arginine 78, arginine 103, and 130-138; that span reads DPMLATGGS. Residues isoleucine 193 and 198–200 contribute to the uracil site; that span reads GDA. Aspartate 199 contacts 5-phospho-alpha-D-ribose 1-diphosphate.

It belongs to the UPRTase family. Mg(2+) is required as a cofactor.

The enzyme catalyses UMP + diphosphate = 5-phospho-alpha-D-ribose 1-diphosphate + uracil. The protein operates within pyrimidine metabolism; UMP biosynthesis via salvage pathway; UMP from uracil: step 1/1. Allosterically activated by GTP. Its function is as follows. Catalyzes the conversion of uracil and 5-phospho-alpha-D-ribose 1-diphosphate (PRPP) to UMP and diphosphate. This chain is Uracil phosphoribosyltransferase, found in Neisseria meningitidis serogroup C (strain 053442).